The sequence spans 180 residues: Large ribosomal subunit protein uL6 (180 aa).

This sequence belongs to the universal ribosomal protein uL6 family. In terms of assembly, part of the 50S ribosomal subunit.

In terms of biological role, this protein binds to the 23S rRNA, and is important in its secondary structure. It is located near the subunit interface in the base of the L7/L12 stalk, and near the tRNA binding site of the peptidyltransferase center. This Clostridium botulinum (strain Eklund 17B / Type B) protein is Large ribosomal subunit protein uL6.